Reading from the N-terminus, the 435-residue chain is Probable exopolygalacturonase B (435 aa).

An N-terminal signal peptide occupies residues 1–15 (MKFFLATLFASAVSS). N-linked (GlcNAc...) asparagine glycosylation is found at asparagine 59, asparagine 184, and asparagine 224. 5 PbH1 repeats span residues 208–239 (SKDV…DSLN), 240–261 (VDGL…SPKP), 262–283 (NTTN…SMGS), 294–315 (IEHA…RLKA), and 326–347 (INNI…VLDQ). The active-site Proton donor is the aspartate 254. Cysteine 256 and cysteine 273 are oxidised to a cystine. N-linked (GlcNAc...) asparagine glycans are attached at residues asparagine 262 and asparagine 274. The active site involves histidine 277. 4 N-linked (GlcNAc...) asparagine glycosylation sites follow: asparagine 301, asparagine 328, asparagine 365, and asparagine 373. The PbH1 6 repeat unit spans residues 366 to 388 (VTNILFENISGTSSGKNGKVVAD). Cysteine 391 and cysteine 397 are disulfide-bonded. Asparagine 406 is a glycosylation site (N-linked (GlcNAc...) asparagine).

It belongs to the glycosyl hydrolase 28 family.

Its subcellular location is the secreted. The enzyme catalyses [(1-&gt;4)-alpha-D-galacturonosyl](n) + H2O = alpha-D-galacturonate + [(1-&gt;4)-alpha-D-galacturonosyl](n-1). Functionally, specific in hydrolyzing the terminal glycosidic bond of polygalacturonic acid and oligogalacturonates. This chain is Probable exopolygalacturonase B (pgxB), found in Aspergillus oryzae (strain ATCC 42149 / RIB 40) (Yellow koji mold).